We begin with the raw amino-acid sequence, 437 residues long: 3-phosphoshikimate 1-carboxyvinyltransferase (437 aa).

3 residues coordinate 3-phosphoshikimate: Lys22, Ser23, and Arg27. Residue Lys22 coordinates phosphoenolpyruvate. Phosphoenolpyruvate-binding residues include Gly96 and Arg125. Positions 170, 172, 323, and 350 each coordinate 3-phosphoshikimate. Residue Gln172 participates in phosphoenolpyruvate binding. Asp323 (proton acceptor) is an active-site residue. Residues Arg354 and Arg396 each contribute to the phosphoenolpyruvate site.

It belongs to the EPSP synthase family. In terms of assembly, monomer.

It is found in the cytoplasm. It catalyses the reaction 3-phosphoshikimate + phosphoenolpyruvate = 5-O-(1-carboxyvinyl)-3-phosphoshikimate + phosphate. It participates in metabolic intermediate biosynthesis; chorismate biosynthesis; chorismate from D-erythrose 4-phosphate and phosphoenolpyruvate: step 6/7. Functionally, catalyzes the transfer of the enolpyruvyl moiety of phosphoenolpyruvate (PEP) to the 5-hydroxyl of shikimate-3-phosphate (S3P) to produce enolpyruvyl shikimate-3-phosphate and inorganic phosphate. This chain is 3-phosphoshikimate 1-carboxyvinyltransferase, found in Synechococcus sp. (strain RCC307).